A 245-amino-acid chain; its full sequence is Eukaryotic translation initiation factor 3 subunit K (245 aa).

One can recognise a PCI domain in the interval 46-227; sequence YDCYANLALL…EAKGTVVREN (182 aa).

This sequence belongs to the eIF-3 subunit K family. Component of the eukaryotic translation initiation factor 3 (eIF-3) complex.

The protein localises to the cytoplasm. Component of the eukaryotic translation initiation factor 3 (eIF-3) complex, which is involved in protein synthesis of a specialized repertoire of mRNAs and, together with other initiation factors, stimulates binding of mRNA and methionyl-tRNAi to the 40S ribosome. The eIF-3 complex specifically targets and initiates translation of a subset of mRNAs involved in cell proliferation. This is Eukaryotic translation initiation factor 3 subunit K from Phaeosphaeria nodorum (strain SN15 / ATCC MYA-4574 / FGSC 10173) (Glume blotch fungus).